A 173-amino-acid chain; its full sequence is Peptide methionine sulfoxide reductase MsrA (173 aa).

Cysteine 10 is an active-site residue.

It belongs to the MsrA Met sulfoxide reductase family.

The catalysed reaction is L-methionyl-[protein] + [thioredoxin]-disulfide + H2O = L-methionyl-(S)-S-oxide-[protein] + [thioredoxin]-dithiol. It catalyses the reaction [thioredoxin]-disulfide + L-methionine + H2O = L-methionine (S)-S-oxide + [thioredoxin]-dithiol. Functionally, has an important function as a repair enzyme for proteins that have been inactivated by oxidation. Catalyzes the reversible oxidation-reduction of methionine sulfoxide in proteins to methionine. This is Peptide methionine sulfoxide reductase MsrA from Psychrobacter cryohalolentis (strain ATCC BAA-1226 / DSM 17306 / VKM B-2378 / K5).